The primary structure comprises 234 residues: tRNA (guanine-N(1)-)-methyltransferase (234 aa).

S-adenosyl-L-methionine is bound by residues Gly115 and 135-140; that span reads VGDYIL.

Belongs to the RNA methyltransferase TrmD family. As to quaternary structure, homodimer.

The protein localises to the cytoplasm. The enzyme catalyses guanosine(37) in tRNA + S-adenosyl-L-methionine = N(1)-methylguanosine(37) in tRNA + S-adenosyl-L-homocysteine + H(+). In terms of biological role, specifically methylates guanosine-37 in various tRNAs. This is tRNA (guanine-N(1)-)-methyltransferase from Rickettsia akari (strain Hartford).